A 947-amino-acid chain; its full sequence is Microtubule cross-linking factor 3 (947 aa).

The signal sequence occupies residues 1 to 21 (MSQPPIGGAAPATAAASPAAA). Disordered stretches follow at residues 1-251 (MSQP…SYWK), 266-368 (KERA…TLKN), and 496-524 (LSLK…DNED). Low complexity-rich tracts occupy residues 9–24 (AAPA…AATE), 72–81 (QQQLQQQQQQ), and 109–137 (APKG…ALGG). Residues 141-151 (GPPEEPPRELE) are compositionally biased toward basic and acidic residues. The segment covering 164 to 180 (GEGGGGGGEGGGAGGGS) has biased composition (gly residues). Positions 214–236 (ASPSPSSSSAGKTPGTGSRNSGS) are enriched in low complexity. Over residues 237–248 (GVAGGGSGGGGS) the composition is skewed to gly residues. Low complexity-rich tracts occupy residues 287–297 (SSRSSPVSGPP) and 304–325 (AVAS…AEGS). The stretch at 342 to 726 (HPQQLQEQEE…GKVMQLQYEN (385 aa)) forms a coiled coil. Composition is skewed to basic and acidic residues over residues 355-368 (EMEK…TLKN) and 496-513 (LSLK…EKKA). Residue Ser-569 is modified to Phosphoserine. The interval 743-786 (GIRGSPRDSDAESDAGKKESDDDSRPPHRKREGPIGGESDSEEV) is disordered. A compositionally biased stretch (basic and acidic residues) spans 747-768 (SPRDSDAESDAGKKESDDDSRP). Ser-781 carries the phosphoserine modification. Residues 811-835 (DRQQMKDIRSEAERLGKTIDRLIAD) adopt a coiled-coil conformation. A helical transmembrane segment spans residues 915-935 (PIILLILILVLFSSLSYTTIF).

Belongs to the MTCL family.

It localises to the membrane. This Homo sapiens (Human) protein is Microtubule cross-linking factor 3.